The following is a 314-amino-acid chain: Deoxymugineic acid synthase 1 (314 aa).

The disordered stretch occupies residues 1–21 (MGAGDRTVAGMPRIGMGTAVQ). Position 44 (Asp44) interacts with NADP(+). The Proton donor role is filled by Tyr49. His112 is a substrate binding site. NADP(+) contacts are provided by residues 158 to 159 (AN), Gln180, 258 to 266 (FDEARMREN), and 273 to 281 (ELTEEERRR).

It belongs to the aldo/keto reductase family.

It carries out the reaction 2'-deoxymugineate + NAD(+) = 3''-deamino-3''-oxonicotianamine + NADH + H(+). The catalysed reaction is 2'-deoxymugineate + NADP(+) = 3''-deamino-3''-oxonicotianamine + NADPH + H(+). It functions in the pathway siderophore biosynthesis. Its function is as follows. Catalyzes the reduction of a 3''-keto intermediate during the biosynthesis of 2'-deoxymugineic acid (DMA) from L-Met. Involved in the formation of phytosiderophores (MAs) belonging to the mugineic acid family and required to acquire iron. The sequence is that of Deoxymugineic acid synthase 1 from Hordeum vulgare (Barley).